We begin with the raw amino-acid sequence, 498 residues long: Galactose-1-phosphate uridylyltransferase (498 aa).

The protein belongs to the galactose-1-phosphate uridylyltransferase type 2 family.

It localises to the cytoplasm. It catalyses the reaction alpha-D-galactose 1-phosphate + UDP-alpha-D-glucose = alpha-D-glucose 1-phosphate + UDP-alpha-D-galactose. The protein operates within carbohydrate metabolism; galactose metabolism. In Clostridium perfringens (strain 13 / Type A), this protein is Galactose-1-phosphate uridylyltransferase.